The primary structure comprises 133 residues: Homeobox protein HD-5 (133 aa).

The homeobox DNA-binding region spans 34-93; it reads SKRSRLKLSGQQIDVLESNFKIDSHPNSATKSLLSNALSIPLKNIQIWFQNRRAKEKTAR. Residues 86–109 are disordered; that stretch reads RAKEKTARDGGRRRSGNAEIEDGE.

The protein localises to the nucleus. The sequence is that of Homeobox protein HD-5 (HD-5) from Encephalitozoon cuniculi (strain GB-M1) (Microsporidian parasite).